The primary structure comprises 61 residues: Bactericidin B-5P (61 aa).

The signal sequence occupies residues 1–22 (MNFSRVLFFVFACLSAFAMASA). Positions 23-24 (AP) are cleaved as a propeptide — removed by a dipeptidylpeptidase. At glycine 60 the chain carries Glycine amide.

Belongs to the cecropin family.

The protein resides in the secreted. In terms of biological role, cecropins have lytic and antibacterial activity against several Gram-positive and Gram-negative bacteria. This is Bactericidin B-5P from Manduca sexta (Tobacco hawkmoth).